The following is a 124-amino-acid chain: Small ribosomal subunit protein eS25 (124 aa).

The segment covering 1-22 has biased composition (basic and acidic residues); the sequence is MPPKDSKQKKDAGKSKKDKDPV. Residues 1 to 37 are disordered; the sequence is MPPKDSKQKKDAGKSKKDKDPVNKSGGKAKKKKWSKG. Positions 27–37 are enriched in basic residues; that stretch reads GKAKKKKWSKG.

The protein belongs to the eukaryotic ribosomal protein eS25 family. Component of the small ribosomal subunit.

It localises to the cytoplasm. Its function is as follows. Component of the small ribosomal subunit. The ribosome is a large ribonucleoprotein complex responsible for the synthesis of proteins in the cell. This chain is Small ribosomal subunit protein eS25 (rps25), found in Danio rerio (Zebrafish).